Consider the following 1048-residue polypeptide: FERM, ARHGEF and pleckstrin domain-containing protein 1 (1048 aa).

The segment at 1 to 37 (MGEIEQKPTPASRLGAPENSGISTLERGQKPPPTPSG) is disordered. Phosphoserine occurs at positions 20 and 23. The residue at position 24 (Thr24) is a Phosphothreonine. In terms of domain architecture, FERM spans 40–320 (MTVKIQMLDD…EHHAFFRLFE (281 aa)). Phosphoserine is present on residues Ser340, Ser373, Ser389, Ser403, Ser427, Ser433, and Ser437. Positions 361–536 (FERKHSKIHS…TDDEEEGRRK (176 aa)) are disordered. The span at 371-395 (TRSLVSQPTAPNSEVPKQSPQSASL) shows a compositional bias: polar residues. Composition is skewed to polar residues over residues 472 to 491 (STGSLTGSPHLSELSINSQG) and 498 to 513 (VTLSPNLSPDNKQASP). A phosphoserine mark is found at Ser512 and Ser516. One can recognise a DH domain in the interval 542-733 (KAYYIAKEVS…TEMVAQLHGT (192 aa)). The PH 1 domain occupies 762–859 (EFIRLGSLSK…WMEDIQMAID (98 aa)). Residues Ser836, Ser875, and Ser881 each carry the phosphoserine modification. The tract at residues 865–907 (NGPTPELLASSPPDNKSPDEATAADQESEDDLSASRTSLERQA) is disordered. Residue Thr886 is modified to Phosphothreonine. 3 positions are modified to phosphoserine: Ser892, Ser899, and Ser902. One can recognise a PH 2 domain in the interval 935 to 1032 (ENQLSGNLLR…WMEVIRSATS (98 aa)).

Interacts with CADM1. Interacts with RAC1. Detected in brain cortex, hippocampus, striatum, olfactory bulb, cerebellum and hindbrain (at protein level).

The protein localises to the cell membrane. Its subcellular location is the synapse. It localises to the synaptosome. It is found in the cytoplasm. The protein resides in the cytosol. The protein localises to the cell projection. Its subcellular location is the filopodium. It localises to the dendrite. It is found in the dendritic spine. Functions as a guanine nucleotide exchange factor for RAC1. May play a role in semaphorin signaling. Plays a role in the assembly and disassembly of dendritic filopodia, the formation of dendritic spines, regulation of dendrite length and ultimately the formation of synapses. In Mus musculus (Mouse), this protein is FERM, ARHGEF and pleckstrin domain-containing protein 1 (Farp1).